The chain runs to 213 residues: Nucleolar protein 12 (213 aa).

The stretch at 32–95 (GFHKRKVERK…RLVTAKTESV (64 aa)) forms a coiled coil. Residues 117 to 213 (ARLLGLPTPE…LTGKARHSGE (97 aa)) are disordered. 2 stretches are compositionally biased toward basic residues: residues 169 to 181 (AHSR…KRLR) and 197 to 213 (SKTR…HSGE).

This sequence belongs to the RRP17 family. In terms of assembly, interacts with KIAA1191.

It localises to the nucleus. The protein localises to the nucleolus. It is found in the cytoplasm. Multifunctional RNA binding protein that plays a role in RNA metabolism and DNA maintenance. Participates in the resolution of DNA stress and the maintenance of genome integrity by localizing to sites of DNA insults. Also plays a role in proper nucleolar organization by limiting nucleolar size and regulating nucleolar number. Mechanistically, regulates the nucleolar levels of fibrillarin and nucleolin, two key players in pre-rRNA processing and ribosome assembly. The sequence is that of Nucleolar protein 12 (NOL12) from Bos taurus (Bovine).